A 256-amino-acid polypeptide reads, in one-letter code: tRNA pseudouridine synthase A (256 aa).

Residue aspartate 55 is the Nucleophile of the active site. Tyrosine 113 contributes to the substrate binding site.

The protein belongs to the tRNA pseudouridine synthase TruA family. As to quaternary structure, homodimer.

It catalyses the reaction uridine(38/39/40) in tRNA = pseudouridine(38/39/40) in tRNA. Formation of pseudouridine at positions 38, 39 and 40 in the anticodon stem and loop of transfer RNAs. The polypeptide is tRNA pseudouridine synthase A (Ligilactobacillus salivarius (strain UCC118) (Lactobacillus salivarius)).